The sequence spans 448 residues: Bud neck protein 5 (448 aa).

Disordered regions lie at residues 63-103, 171-211, and 242-352; these read SGND…DPSQ, DDEW…TLGG, and GDNE…SSPI. A phosphoserine mark is found at serine 70 and serine 179. Residues 171–180 show a composition bias toward acidic residues; it reads DDEWEDEKSD. Residues 181 to 191 are compositionally biased toward basic and acidic residues; the sequence is VEEGRVDKGTE. Serine 194 carries the post-translational modification Phosphoserine. A compositionally biased stretch (basic and acidic residues) spans 245–262; it reads EYNHESSRLADQTPHDDN. Position 257 is a phosphothreonine (threonine 257). A compositionally biased stretch (polar residues) spans 264 to 281; the sequence is ENCPNRSGGSTPLDSQTK. Phosphoserine is present on residues serine 270 and serine 273. Threonine 274 carries the phosphothreonine modification. The segment covering 325-343 has biased composition (low complexity); the sequence is SVSSNSNSRNGSRKSSLNK. Phosphoserine is present on residues serine 332 and serine 340. Tyrosine 344 carries the phosphotyrosine modification. Residues serine 346 and serine 350 each carry the phosphoserine modification.

Component of the GIN4 complex composed of at least BNI5, CDC3, CDC10, CDC11, CDC12, GIN4, NAP1 and SHS1. Interacts directly with CDC11, CDC12 and SHS1.

The protein localises to the cytoplasm. Its subcellular location is the bud neck. Required for normal septin function and cytokinesis. Its recruitment to the bud neck by CDCd11 and SHS1 ensures efficient localization at the bud neck of MYO1, the type II myosin of the actomyosin contractile ring. The chain is Bud neck protein 5 from Saccharomyces cerevisiae (strain ATCC 204508 / S288c) (Baker's yeast).